Here is a 345-residue protein sequence, read N- to C-terminus: Dihydroorotase (345 aa).

H13 and H15 together coordinate Zn(2+). Substrate contacts are provided by residues 15 to 17 (HLR) and N41. Zn(2+)-binding residues include K100, H137, and H175. An N6-carboxylysine modification is found at K100. H137 contributes to the substrate binding site. L220 serves as a coordination point for substrate. D248 serves as a coordination point for Zn(2+). D248 is an active-site residue. The substrate site is built by H252 and A264.

The protein belongs to the metallo-dependent hydrolases superfamily. DHOase family. Class II DHOase subfamily. In terms of assembly, homodimer. It depends on Zn(2+) as a cofactor.

The enzyme catalyses (S)-dihydroorotate + H2O = N-carbamoyl-L-aspartate + H(+). Its pathway is pyrimidine metabolism; UMP biosynthesis via de novo pathway; (S)-dihydroorotate from bicarbonate: step 3/3. In terms of biological role, catalyzes the reversible cyclization of carbamoyl aspartate to dihydroorotate. The polypeptide is Dihydroorotase (Laribacter hongkongensis (strain HLHK9)).